Consider the following 384-residue polypeptide: Urea transporter 1 (384 aa).

Transmembrane regions (helical) follow at residues 61–81, 85–105, 111–131, 138–158, and 168–188; these read ISQVVFVSNPISGILILAGLL, PWWALCGCVGTVVSTLTALLL, AIAAGLQGYNATLVGILMAVF, FWWLIFPVSAMSMTCPVFSSA, and LPVFTLPFNMALSLYLSATGH. Asn-206 carries an N-linked (GlcNAc...) asparagine glycan. Helical transmembrane passes span 250-270, 279-299, 305-325, and 327-347; these read LMCLHAAIGSLLGVIAGLSLA, GLWGFNSSLACIAIGGMFMAL, LLALACALFTAYFGACMTHLM, and AVHLPACTWSFCLATLLFLLL.

The protein belongs to the urea transporter family. Homotrimer; each subunit contains a pore through which urea permeates. Identified in a complex with STOM. Expressed in brain, spleen, kidney, testis and lung, with highest levels in brain.

The protein resides in the cell membrane. It is found in the basolateral cell membrane. The enzyme catalyses urea(in) = urea(out). Functionally, mediates the transport of urea driven by a concentration gradient across the cell membrane. Mediates the transport of urea across the cell membranes of erythrocytes and the renal inner medullary collecting duct which is critical to the urinary concentrating mechanism. Facilitates water transport in erythrocytes. The polypeptide is Urea transporter 1 (Slc14a1) (Rattus norvegicus (Rat)).